The primary structure comprises 369 residues: Anhydro-N-acetylmuramic acid kinase (369 aa).

12 to 19 serves as a coordination point for ATP; the sequence is GTSMDGVD.

It belongs to the anhydro-N-acetylmuramic acid kinase family.

It carries out the reaction 1,6-anhydro-N-acetyl-beta-muramate + ATP + H2O = N-acetyl-D-muramate 6-phosphate + ADP + H(+). Its pathway is amino-sugar metabolism; 1,6-anhydro-N-acetylmuramate degradation. It functions in the pathway cell wall biogenesis; peptidoglycan recycling. In terms of biological role, catalyzes the specific phosphorylation of 1,6-anhydro-N-acetylmuramic acid (anhMurNAc) with the simultaneous cleavage of the 1,6-anhydro ring, generating MurNAc-6-P. Is required for the utilization of anhMurNAc either imported from the medium or derived from its own cell wall murein, and thus plays a role in cell wall recycling. In Shewanella woodyi (strain ATCC 51908 / MS32), this protein is Anhydro-N-acetylmuramic acid kinase.